Consider the following 602-residue polypeptide: Aspartate--tRNA(Asp/Asn) ligase (602 aa).

Glu-187 is an L-aspartate binding site. The segment at 211–214 is aspartate; sequence QQFK. L-aspartate contacts are provided by Arg-233 and His-461. An ATP-binding site is contributed by 233–235; sequence RDE. Glu-495 lines the ATP pocket. Arg-502 serves as a coordination point for L-aspartate. ATP is bound at residue 547–550; the sequence is GLDR.

It belongs to the class-II aminoacyl-tRNA synthetase family. Type 1 subfamily. In terms of assembly, homodimer.

It localises to the cytoplasm. The enzyme catalyses tRNA(Asx) + L-aspartate + ATP = L-aspartyl-tRNA(Asx) + AMP + diphosphate. Its function is as follows. Aspartyl-tRNA synthetase with relaxed tRNA specificity since it is able to aspartylate not only its cognate tRNA(Asp) but also tRNA(Asn). Reaction proceeds in two steps: L-aspartate is first activated by ATP to form Asp-AMP and then transferred to the acceptor end of tRNA(Asp/Asn). The protein is Aspartate--tRNA(Asp/Asn) ligase of Chlorobium phaeovibrioides (strain DSM 265 / 1930) (Prosthecochloris vibrioformis (strain DSM 265)).